Consider the following 341-residue polypeptide: S-adenosylmethionine:tRNA ribosyltransferase-isomerase (341 aa).

The protein belongs to the QueA family. Monomer.

Its subcellular location is the cytoplasm. The catalysed reaction is 7-aminomethyl-7-carbaguanosine(34) in tRNA + S-adenosyl-L-methionine = epoxyqueuosine(34) in tRNA + adenine + L-methionine + 2 H(+). It functions in the pathway tRNA modification; tRNA-queuosine biosynthesis. Transfers and isomerizes the ribose moiety from AdoMet to the 7-aminomethyl group of 7-deazaguanine (preQ1-tRNA) to give epoxyqueuosine (oQ-tRNA). This is S-adenosylmethionine:tRNA ribosyltransferase-isomerase from Clostridium botulinum (strain ATCC 19397 / Type A).